The primary structure comprises 618 residues: Putative ATP-dependent DNA helicase Q1 (618 aa).

The Helicase ATP-binding domain maps to I95–I270. L108 to S115 lines the ATP pocket. The DEVH box motif lies at D214 to H217. Residues C295–S443 form the Helicase C-terminal domain. Residues C448, C466, C470, and C473 each coordinate Zn(2+). The segment at K586 to L618 is disordered. Acidic residues predominate over residues S603–L618.

Belongs to the helicase family. RecQ subfamily. Zn(2+) is required as a cofactor.

The protein resides in the nucleus. The catalysed reaction is Couples ATP hydrolysis with the unwinding of duplex DNA by translocating in the 3'-5' direction.. It catalyses the reaction ATP + H2O = ADP + phosphate + H(+). Its function is as follows. DNA helicase that may play a role in the repair of DNA that is damaged by ultraviolet light or other mutagens. Exhibits a magnesium-dependent ATP-dependent DNA-helicase activity that unwinds single- and double-stranded DNA in a 3'-5' direction. The chain is Putative ATP-dependent DNA helicase Q1 from Caenorhabditis briggsae.